Consider the following 666-residue polypeptide: Probable potassium transport system protein Kup (666 aa).

A run of 12 helical transmembrane segments spans residues 16-36, 58-78, 100-120, 141-161, 165-185, 221-241, 253-273, 292-312, 343-363, 373-393, 399-419, and 424-444; these read GFIIALGIVYGDIGTSPLYTM, ISLIIWTLTLITTIKYVLIAL, PWLIIPAMIGGATLLSDGALT, IYQNQTNVIITTLVILIVLFG, FGTGFIGKIFGPVMFIWFSFL, IFILGSIFLATTGAEALYSDL, WPFVKMCIVLSYCGQAAWILA, LTVYVVILATLAAIIASQALI, LYIPVINWILFAVTSCTVLYF, YGLAITITMLMTTILLNYYLI, PFLAHLVMTFFALVEFIFFWA, and FMHGGYVVVILALAIVFVMFI.

Belongs to the HAK/KUP transporter (TC 2.A.72) family.

The protein localises to the cell membrane. The catalysed reaction is K(+)(in) + H(+)(in) = K(+)(out) + H(+)(out). Its function is as follows. Transport of potassium into the cell. Likely operates as a K(+):H(+) symporter. The protein is Probable potassium transport system protein Kup of Streptococcus pyogenes serotype M5 (strain Manfredo).